The following is a 530-amino-acid chain: PC4 and SFRS1-interacting protein (530 aa).

The 64-residue stretch at 1–64 (MTRDFKPGDL…PKDIFPYSEN (64 aa)) folds into the PWWP domain. Residue Lys-75 forms a Glycyl lysine isopeptide (Lys-Gly) (interchain with G-Cter in SUMO2) linkage. Residues 88–349 (PKVKFSSQQA…VEKKRETSMD (262 aa)) form a disordered region. A compositionally biased stretch (polar residues) spans 92–104 (FSSQQAATKQSNA). Phosphoserine occurs at positions 102, 105, and 106. Over residues 113–135 (KETSVSKEDTDHEEKASNEDVTK) the composition is skewed to basic and acidic residues. 2 positions are modified to phosphothreonine: Thr-115 and Thr-122. The residue at position 129 (Ser-129) is a Phosphoserine. Thr-141 carries the post-translational modification Phosphothreonine. Over residues 144–153 (AARRGRKRKA) the composition is skewed to basic residues. Positions 146-156 (RRGRKRKAEKQ) match the Nuclear localization signal motif. Thr-167 is modified (phosphothreonine). Phosphoserine is present on residues Ser-177 and Ser-206. Residues 213 to 261 (EEDKSKKKGQEEKQPKKQPKKDEEGQKEEDKPRKEPDKKEGKKEVESKR) show a composition bias toward basic and acidic residues. Ser-271 is subject to Phosphoserine. A Phosphothreonine modification is found at Thr-272. 2 positions are modified to phosphoserine: Ser-273 and Ser-275. Residues 274-283 (DSEEEGDDQE) are compositionally biased toward acidic residues. A compositionally biased stretch (basic residues) spans 287–302 (KRKGGRNFQTAHRRNM). Basic and acidic residues predominate over residues 305 to 349 (GQHEKEAADRKRKQEEQMETEQQNKDEGKKPEVKKVEKKRETSMD). 2 coiled-coil regions span residues 306–334 (QHEKEAADRKRKQEEQMETEQQNKDEGKK) and 371–395 (NRCIEALDELASLQVTMQQAQKHTE). The integrase-binding domain (IBD) stretch occupies residues 340–417 (VEKKRETSMD…VSQVIMEKST (78 aa)). Ser-434 carries the post-translational modification Phosphoserine. Thr-437 is subject to Phosphothreonine. Ser-443 is subject to Phosphoserine. A compositionally biased stretch (basic and acidic residues) spans 446–473 (EQRQHEEANKTKDQGKKGPNKKLEKEQT). A disordered region spans residues 446–530 (EQRQHEEANK…ISLKDSTLDN (85 aa)). The span at 474–494 (GSKTLNGGSDAQDGNQPQHNG) shows a compositional bias: polar residues. Residues 498–530 (EDSKDNHEASTKKKPSSEERETEISLKDSTLDN) show a composition bias toward basic and acidic residues. Ser-514 carries the phosphoserine modification. Citrulline is present on Arg-517. Ser-522 is subject to Phosphoserine. Thr-527 carries the phosphothreonine modification.

This sequence belongs to the HDGF family. As to quaternary structure, monomer. Interacts with IFRD1/PC4. Isoform 2 interacts with SFRS1. Isoform 1 interacts (via IBD domain) with POGZ (via IBM motif) and CDCA7L (via IBM motifs). Interacts (via IBD domain) with KMT2A (via IBM motifs) with a moderate affinity whereas interacts with the KMT2A-MEN1 complex with a greater affinity; MEN1 enhances interaction of KMT2A with PSIP1. Interacts with fusion protein KMT2A-MLLT3. Interacts (via IBD domain) with IWS1 (via IBM motif), MED1 (via IBM motif) and DBF4 (via IBM motifs). In terms of assembly, (Microbial infection) Interacts (via IBD domain) with human HIV-1 integrase protein (HIV-1 IN), determining its nuclear localization, its tight association with chromatin and its protection from the proteasome. (Microbial infection) Interacts with HIV-2 IN. In terms of processing, citrullinated by PADI4. Widely expressed. Expressed at high level in the thymus. Expressed in fetal and adult brain. Expressed in neurons, but not astrocytes. Markedly elevated in fetal as compared to adult brain. In the adult brain, expressed in the subventricular zone (SVZ), in hippocampus, and undetectable elsewhere. In the fetal brain, expressed in the germinal neuroepithelium and cortical plate regions.

The protein localises to the nucleus. Transcriptional coactivator involved in neuroepithelial stem cell differentiation and neurogenesis. Involved in particular in lens epithelial cell gene regulation and stress responses. May play an important role in lens epithelial to fiber cell terminal differentiation. May play a protective role during stress-induced apoptosis. Isoform 2 is a more general and stronger transcriptional coactivator. Isoform 2 may also act as an adapter to coordinate pre-mRNA splicing. Cellular cofactor for lentiviral integration. The sequence is that of PC4 and SFRS1-interacting protein (PSIP1) from Homo sapiens (Human).